The following is a 465-amino-acid chain: MKGVISQVMGPVVDVDFNDYLPKINEAIEVYFEVEGKKNRLILEVAAHLGDNRVRTIAMDMSEGLTRGLEATALGAPISVPVGEKVLGRIFNVVGDLIDEGEGVEFDKHWSIHRDPPPFEEQSTKSEIFETGIKVVDLLAPYAKGGKVGLFGGAGVGKTVIIMELIHNVAFKHSGYSVFAGVGERTREGNDLYHEMKESNVLDKVALCYGQMNEPPGARNRIALTGLTMAEYFRDEMGLDVLMFIDNIFRFSQSGAEMSALLGRIPSAVGYQPTLASEMGKFQERITSTKKGSITSVQAVYVPADDLTDPAPATVFAHLDATTVLNRAIAEKGIYPAVDPLDSTSRMLDPQILGEDHYKVARGVQAVLQKYKDLQDIIAILGMDELSEEDKLTVDRARKIERFLSQPFFVAEVFTGSPGKYVSLEENIAGFKGILDGKYDSLPEAAFYMVGNIDEALAKAEKLKA.

152–159 (GGAGVGKT) contributes to the ATP binding site.

It belongs to the ATPase alpha/beta chains family. In terms of assembly, F-type ATPases have 2 components, CF(1) - the catalytic core - and CF(0) - the membrane proton channel. CF(1) has five subunits: alpha(3), beta(3), gamma(1), delta(1), epsilon(1). CF(0) has three main subunits: a(1), b(2) and c(9-12). The alpha and beta chains form an alternating ring which encloses part of the gamma chain. CF(1) is attached to CF(0) by a central stalk formed by the gamma and epsilon chains, while a peripheral stalk is formed by the delta and b chains.

Its subcellular location is the cell inner membrane. It carries out the reaction ATP + H2O + 4 H(+)(in) = ADP + phosphate + 5 H(+)(out). Produces ATP from ADP in the presence of a proton gradient across the membrane. The catalytic sites are hosted primarily by the beta subunits. In Campylobacter curvus (strain 525.92), this protein is ATP synthase subunit beta.